A 292-amino-acid chain; its full sequence is AKT-interacting protein homolog B (292 aa).

A disordered region spans residues 1–44 (MNPFWNMPSASVRKRSDNDEKIATADQKISPARSSSAKKQLPSI). Basic and acidic residues predominate over residues 14 to 23 (KRSDNDEKIA). The region spanning 75-223 (YLEYSLLAEF…VVDSVKLCNS (149 aa)) is the UBC core domain.

This sequence belongs to the ubiquitin-conjugating enzyme family. FTS subfamily.

The protein resides in the cytoplasm. It localises to the cell membrane. In terms of biological role, may function to promote vesicle trafficking and/or fusion. May also regulate apoptosis. The protein is AKT-interacting protein homolog B (aktip-b) of Xenopus laevis (African clawed frog).